A 563-amino-acid polypeptide reads, in one-letter code: Secreted lipase ARB07186/07185 (563 aa).

An N-terminal signal peptide occupies residues 1 to 20 (MAKYDFVMLWILTLTAAIAA). Residues Cys-83 and Cys-101 are joined by a disulfide bond. The Acyl-ester intermediate role is filled by Ser-215. Cys-268 and Cys-281 are oxidised to a cystine.

It belongs to the type-B carboxylesterase/lipase family.

The protein localises to the secreted. It carries out the reaction a triacylglycerol + H2O = a diacylglycerol + a fatty acid + H(+). In Arthroderma benhamiae (strain ATCC MYA-4681 / CBS 112371) (Trichophyton mentagrophytes), this protein is Secreted lipase ARB07186/07185.